Here is a 244-residue protein sequence, read N- to C-terminus: Leucyl/phenylalanyl-tRNA--protein transferase (244 aa).

The protein belongs to the L/F-transferase family.

Its subcellular location is the cytoplasm. It catalyses the reaction N-terminal L-lysyl-[protein] + L-leucyl-tRNA(Leu) = N-terminal L-leucyl-L-lysyl-[protein] + tRNA(Leu) + H(+). The catalysed reaction is N-terminal L-arginyl-[protein] + L-leucyl-tRNA(Leu) = N-terminal L-leucyl-L-arginyl-[protein] + tRNA(Leu) + H(+). The enzyme catalyses L-phenylalanyl-tRNA(Phe) + an N-terminal L-alpha-aminoacyl-[protein] = an N-terminal L-phenylalanyl-L-alpha-aminoacyl-[protein] + tRNA(Phe). Functions in the N-end rule pathway of protein degradation where it conjugates Leu, Phe and, less efficiently, Met from aminoacyl-tRNAs to the N-termini of proteins containing an N-terminal arginine or lysine. The sequence is that of Leucyl/phenylalanyl-tRNA--protein transferase from Thermodesulfovibrio yellowstonii (strain ATCC 51303 / DSM 11347 / YP87).